The following is a 22-amino-acid chain: Peptide PGLa-B1 (22 aa).

Leu22 is subject to Leucine amide.

As to expression, expressed by the skin glands.

It localises to the secreted. In terms of biological role, has antibacterial and antifungal activity. The chain is Peptide PGLa-B1 from Xenopus borealis (Kenyan clawed frog).